The chain runs to 499 residues: Rhodopsin, GQ-coupled (499 aa).

Residues 1 to 50 (MADNKSTLPGLPDINGTLNRSMTPNTGWEGPYDMSVHLHWTQFPPVTEEW) are Extracellular-facing. Residues N4, N15, and N19 are each glycosylated (N-linked (GlcNAc...) asparagine). Residues 51-75 (HYIIGVYITIVGLLGIMGNTTVVYI) form a helical membrane-spanning segment. The Cytoplasmic portion of the chain corresponds to 76-87 (FSNTKSLRSPSN). Residues 88 to 114 (LFVVNLAVSDLIFSAVNGFPLLTVSSF) traverse the membrane as a helical segment. At 115 to 128 (HQKWIFGSLFCQLY) the chain is on the extracellular side. The cysteines at positions 125 and 203 are disulfide-linked. A helical transmembrane segment spans residues 129–148 (GFVGGVFGLMSINTLTAISI). Residues 149 to 168 (DRYVVITKPLQASQTMTRRK) are Cytoplasmic-facing. A helical membrane pass occupies residues 169-192 (VHLMIVIVWVLSILLSIPPFFGWG). Topologically, residues 193–216 (AYIPEGFQTSCTFDYLTKTARTRT) are extracellular. The chain crosses the membrane as a helical span at residues 217-244 (YIVVLYLFGFLIPLIIIGVCYVLIIRGV). Topologically, residues 245–278 (RRHDQKMLTITRSMKTEDARANNKRARSELRISK) are cytoplasmic. A helical transmembrane segment spans residues 279 to 302 (IAMTVTCLFIISWSPYAIIALIAQ). The Extracellular segment spans residues 303–310 (FGPAHWIT). A helical transmembrane segment spans residues 311 to 335 (PLVSELPMMLAKSSSMHNPVVYALS). Residue K322 is modified to N6-(retinylidene)lysine. Residues 336–499 (HPKFRKALYQ…QRVNGLTFNS (164 aa)) lie on the Cytoplasmic side of the membrane. Residues C353 and C354 are each lipidated (S-palmitoyl cysteine).

The protein belongs to the G-protein coupled receptor 1 family. Opsin subfamily. Post-translationally, phosphorylated on some or all of the serine and threonine residues present in the C-terminal region. Retina. Expressed in the depolarizing cell layer of the photoreceptor cells distant from the lens.

It is found in the membrane. Visual pigments such as rhodopsin and porphyropsin are light-absorbing molecules that mediate vision. Rhodopsin consists of an apoprotein, opsin, covalently linked to 11-cis-retinal. This receptor is coupled to the activation of phospholipase C. Porphyropsin consists of opsin covalently linked to 11-cis 3,4-didehydroretinal. This is Rhodopsin, GQ-coupled (SCOP1) from Mizuhopecten yessoensis (Japanese scallop).